A 356-amino-acid chain; its full sequence is Methylthioribose-1-phosphate isomerase (356 aa).

Residues 53 to 55 (RGA), Arg97, and Gln203 each bind substrate. Residue Asp244 is the Proton donor of the active site. 254 to 255 (NK) is a substrate binding site.

The protein belongs to the eIF-2B alpha/beta/delta subunits family. MtnA subfamily.

The enzyme catalyses 5-(methylsulfanyl)-alpha-D-ribose 1-phosphate = 5-(methylsulfanyl)-D-ribulose 1-phosphate. It participates in amino-acid biosynthesis; L-methionine biosynthesis via salvage pathway; L-methionine from S-methyl-5-thio-alpha-D-ribose 1-phosphate: step 1/6. Its function is as follows. Catalyzes the interconversion of methylthioribose-1-phosphate (MTR-1-P) into methylthioribulose-1-phosphate (MTRu-1-P). The polypeptide is Methylthioribose-1-phosphate isomerase (Rhodopirellula baltica (strain DSM 10527 / NCIMB 13988 / SH1)).